The following is a 96-amino-acid chain: MRQYEIMVILDPTLDERTVAPSLDTFLNVVRGDGGTVSKVEVWGKRRLAYEIAKHTEGIYAVIDVVAAPATVSELDRQLGLNESVLRTKVLRTGAR.

The protein belongs to the bacterial ribosomal protein bS6 family.

Its function is as follows. Binds together with bS18 to 16S ribosomal RNA. The sequence is that of Small ribosomal subunit protein bS6 from Mycobacteroides abscessus (strain ATCC 19977 / DSM 44196 / CCUG 20993 / CIP 104536 / JCM 13569 / NCTC 13031 / TMC 1543 / L948) (Mycobacterium abscessus).